We begin with the raw amino-acid sequence, 1857 residues long: U3 small nucleolar RNA-associated protein 10 (1857 aa).

A helical transmembrane segment spans residues 267 to 287 (LTAYSIISVLSSLVPLSADLV). An HEAT repeat occupies 1817-1855 (LIPYIAELLEDDDEEVELEVRNGLVRVIENVLGEPLDRY).

The protein belongs to the HEATR1/UTP10 family. In terms of assembly, component of the ribosomal small subunit (SSU) processome.

It is found in the nucleus. Its subcellular location is the nucleolus. The protein localises to the membrane. Functionally, involved in nucleolar processing of pre-18S ribosomal RNA. Involved in ribosome biosynthesis. The sequence is that of U3 small nucleolar RNA-associated protein 10 from Debaryomyces hansenii (strain ATCC 36239 / CBS 767 / BCRC 21394 / JCM 1990 / NBRC 0083 / IGC 2968) (Yeast).